The following is a 200-amino-acid chain: Recombination protein RecR (200 aa).

The C4-type zinc finger occupies 58–75; that stretch reads CSNCFCLKISQTSPCNFC. The Toprim domain occupies 82–177; sequence SSLCIVATPK…KISRLALGMP (96 aa).

It belongs to the RecR family.

In terms of biological role, may play a role in DNA repair. It seems to be involved in an RecBC-independent recombinational process of DNA repair. It may act with RecF and RecO. The sequence is that of Recombination protein RecR from Chlamydia trachomatis serovar D (strain ATCC VR-885 / DSM 19411 / UW-3/Cx).